The primary structure comprises 274 residues: MNKTAIALLALLASSASLAATPWQKITQPVPGSAQSIGSFSNGCIVGADTLPIQSEHYQVMRTDQRRYFGHPDLVMFIQRLSSQVSNLGMGTVLIGDMGMPAGGRFNGGHASHQTGLDVDIFLQLPKTRWTSAQLLRPQALDLVSRDGKHVVSTLWKPEIFSLIKLAAQDKDVTRIFVNPAIKQQLCFDAGTDRDWLRKVRPWFQHRAHMHVRLRCPADSLECEDQPLPPPGDGCGAELQSWFEPPKPGTTKPEKKTPPPLPPSCQALLDEHVI.

Residues 1–19 form the signal peptide; sequence MNKTAIALLALLASSASLA. 3 cysteine pairs are disulfide-bonded: C44–C265, C187–C235, and C216–C223. Zn(2+)-binding residues include H110, H113, D120, D147, H150, and H211. The interval 227–274 is disordered; sequence PLPPPGDGCGAELQSWFEPPKPGTTKPEKKTPPPLPPSCQALLDEHVI.

Belongs to the peptidase M74 family. As to quaternary structure, dimer. Zn(2+) serves as cofactor.

The protein localises to the periplasm. In terms of biological role, murein endopeptidase that cleaves the D-alanyl-meso-2,6-diamino-pimelyl amide bond that connects peptidoglycan strands. Likely plays a role in the removal of murein from the sacculus. This is Penicillin-insensitive murein endopeptidase from Escherichia coli O9:H4 (strain HS).